We begin with the raw amino-acid sequence, 497 residues long: Cytochrome P450 3A18 (497 aa).

Cysteine 442 is a binding site for heme.

Belongs to the cytochrome P450 family. Requires heme as cofactor.

It is found in the endoplasmic reticulum membrane. It localises to the microsome membrane. The enzyme catalyses an organic molecule + reduced [NADPH--hemoprotein reductase] + O2 = an alcohol + oxidized [NADPH--hemoprotein reductase] + H2O + H(+). Catalyzes 16-beta- and 6-alpha-hydroxylations of testosterone. The sequence is that of Cytochrome P450 3A18 (Cyp3a18) from Rattus norvegicus (Rat).